Reading from the N-terminus, the 1034-residue chain is Potassium-transporting ATPase alpha chain 1 (1034 aa).

At methionine 1 to proline 97 the chain is on the cytoplasmic side. A phosphotyrosine mark is found at tyrosine 7 and tyrosine 10. The disordered stretch occupies residues leucine 14–lysine 41. The span at methionine 26 to lysine 39 shows a compositional bias: basic residues. The residue at position 27 (serine 27) is a Phosphoserine. Residues glutamate 98–alanine 118 traverse the membrane as a helical segment. Residues alanine 119–tyrosine 141 are Lumenal-facing. The helical transmembrane segment at leucine 142–phenylalanine 162 threads the bilayer. At lysine 163–isoleucine 298 the chain is on the cytoplasmic side. The chain crosses the membrane as a helical span at residues glutamate 299–valine 318. The Lumenal portion of the chain corresponds to valine 319–alanine 330. A helical transmembrane segment spans residues methionine 331 to alanine 348. Residues valine 339, alanine 340, valine 342, and glutamate 344 each contribute to the K(+) site. Residues threonine 349–leucine 782 lie on the Cytoplasmic side of the membrane. Aspartate 386 serves as the catalytic 4-aspartylphosphate intermediate. 2 residues coordinate Mg(2+): aspartate 386 and threonine 388. Phosphoserine occurs at positions 462 and 600. Mg(2+)-binding residues include aspartate 727 and aspartate 731. A helical membrane pass occupies residues lysine 783–isoleucine 802. Glutamate 796 contacts K(+). Topologically, residues tyrosine 803–leucine 812 are lumenal. A helical transmembrane segment spans residues glycine 813–alanine 833. Residue glutamate 821 participates in K(+) binding. Topologically, residues tyrosine 834–arginine 853 are cytoplasmic. Position 839 is a phosphoserine (serine 839). The chain crosses the membrane as a helical span at residues leucine 854–phenylalanine 876. Residues alanine 877 to cysteine 928 are Lumenal-facing. The chain crosses the membrane as a helical span at residues tyrosine 929 to lysine 948. Residues threonine 949–asparagine 962 lie on the Cytoplasmic side of the membrane. Serine 953 is subject to Phosphoserine; by PKA. Residues lysine 963 to tyrosine 981 form a helical membrane-spanning segment. Topologically, residues cysteine 982 to phenylalanine 996 are lumenal. A helical membrane pass occupies residues glutamine 997–lysine 1017. Over leucine 1018–tyrosine 1034 the chain is Cytoplasmic.

The protein belongs to the cation transport ATPase (P-type) (TC 3.A.3) family. Type IIC subfamily. The gastric H(+)/K(+) ATPase pump is composed of the catalytic alpha subunit ATP4A and the regulatory beta subunit ATP4B. Interacts (via the P-domain) with ATP4B (via N-terminus); this interaction stabilizes the lumenal-open E2 conformation state and prevents the reverse reaction of the transport cycle. As to expression, expressed in parietal cells (at protein level).

It is found in the apical cell membrane. The enzyme catalyses K(+)(out) + ATP + H2O + H(+)(in) = K(+)(in) + ADP + phosphate + 2 H(+)(out). The catalytic subunit of the gastric H(+)/K(+) ATPase pump which transports H(+) ions in exchange for K(+) ions across the apical membrane of parietal cells. Uses ATP as an energy source to pump H(+) ions to the gastric lumen while transporting K(+) ion from the lumen into the cell. Remarkably generates a million-fold proton gradient across the gastric parietal cell membrane, acidifying the gastric juice down to pH 1. Within a transport cycle, the transfer of a H(+) ion across the membrane is coupled to ATP hydrolysis and is associated with a transient phosphorylation that shifts the pump conformation from inward-facing (E1) to outward-facing state (E2). The release of the H(+) ion in the stomach lumen is followed by binding of K(+) ion converting the pump conformation back to the E1 state. This chain is Potassium-transporting ATPase alpha chain 1, found in Mus musculus (Mouse).